The chain runs to 275 residues: Large ribosomal subunit protein uL2 (275 aa).

Disordered regions lie at residues Ile24–Gly47 and Pro227–Lys261.

Belongs to the universal ribosomal protein uL2 family. In terms of assembly, part of the 50S ribosomal subunit. Forms a bridge to the 30S subunit in the 70S ribosome.

Its function is as follows. One of the primary rRNA binding proteins. Required for association of the 30S and 50S subunits to form the 70S ribosome, for tRNA binding and peptide bond formation. It has been suggested to have peptidyltransferase activity; this is somewhat controversial. Makes several contacts with the 16S rRNA in the 70S ribosome. This chain is Large ribosomal subunit protein uL2, found in Xylella fastidiosa (strain M12).